The chain runs to 520 residues: Signal peptide peptidase-like 2A (520 aa).

A signal peptide spans 1–25; that stretch reads MGPQRRLSPAGAALLWGFLLQLTAA. Over 26 to 172 the chain is Lumenal; that stretch reads QEAILHASGN…PSWPNFDYTM (147 aa). N-linked (GlcNAc...) asparagine glycosylation is found at Asn58, Asn66, Asn74, Asn116, Asn126, and Asn149. The region spanning 63-151 is the PA domain; that stretch reads SLMNLTSTPL…YKDFRDMNQT (89 aa). N-linked (GlcNAc...) (complex) asparagine glycosylation occurs at Asn155. Residues 173-193 form a helical membrane-spanning segment; that stretch reads VVIFVIAVFTVALGGYWSGLV. The Cytoplasmic segment spans residues 194–220; it reads ELENLKAVTTEDREMRKKKEEYLTFSP. A helical transmembrane segment spans residues 221–241; it reads LTVVIFVVICCVMMVLLYFFY. Topologically, residues 242–247 are lumenal; sequence KWLVYV. The helical transmembrane segment at 248-268 threads the bilayer; sequence MIAIFCIASAMSLYNCLAALI. The Cytoplasmic segment spans residues 269–285; sequence HKIPYGQCTIACRGKNM. A helical transmembrane segment spans residues 286 to 306; it reads EVRLIFLSGLCIAVAVVWAVF. Residues 307–311 are Lumenal-facing; that stretch reads RNEDR. Residues 312-332 traverse the membrane as a helical segment; the sequence is WAWILQDILGIAFCLNLIKTL. Residues 333–340 are Cytoplasmic-facing; the sequence is KLPNFKSC. The chain crosses the membrane as a helical span at residues 341-361; the sequence is VILLGLLLLYDVFFVFITPFI. The active site involves Asp351. The Lumenal portion of the chain corresponds to 362–399; the sequence is TKNGESIMVELAAGPFGNNEKLPVVIRVPKLIYFSVMS. Residues 400–420 form a helical membrane-spanning segment; sequence VCLMPVSILGFGDIIVPGLLI. Asp412 is a catalytic residue. Residues 421-437 are Cytoplasmic-facing; that stretch reads AYCRRFDVQTGSSYIYY. The helical transmembrane segment at 438–458 threads the bilayer; it reads VSSTVAYAIGMILTFVVLVLM. The Lumenal portion of the chain corresponds to 459 to 460; it reads KK. Residues 461–481 form a helical membrane-spanning segment; it reads GQPALLYLVPCTLITASVVAW. Positions 463 to 465 match the PAL motif; sequence PAL. Residues 482–520 are Cytoplasmic-facing; sequence RRKEMKKFWKGNSYQMMDHLDCATNEENPVISGEQIVQQ. The YXXo lysosomal targeting motif motif lies at 495-498; sequence YQMM.

Belongs to the peptidase A22B family. As to quaternary structure, interacts with ITM2B. Glycosylated. In terms of tissue distribution, ubiquitous.

It localises to the late endosome membrane. Its subcellular location is the lysosome membrane. It is found in the membrane. Functionally, intramembrane-cleaving aspartic protease (I-CLiP) that cleaves type II membrane signal peptides in the hydrophobic plane of the membrane. Functions in FASLG, ITM2B and TNF processing. Catalyzes the intramembrane cleavage of the anchored fragment of shed TNF-alpha (TNF), which promotes the release of the intracellular domain (ICD) for signaling to the nucleus. Also responsible for the intramembrane cleavage of Fas antigen ligand FASLG, which promotes the release of the intracellular FasL domain (FasL ICD). Essential for degradation of the invariant chain CD74 that plays a central role in the function of antigen-presenting cells in the immune system. Plays a role in the regulation of innate and adaptive immunity. Catalyzes the intramembrane cleavage of the simian foamy virus envelope glycoprotein gp130 independently of prior ectodomain shedding by furin or furin-like proprotein convertase (PC)-mediated cleavage proteolysis. In Homo sapiens (Human), this protein is Signal peptide peptidase-like 2A.